Reading from the N-terminus, the 329-residue chain is Fructose-1,6-bisphosphatase class 1 2 (329 aa).

4 residues coordinate Mg(2+): Glu-92, Asp-111, Leu-113, and Asp-114. Substrate contacts are provided by residues 114–117 (DGSS) and Asn-206. Mg(2+) is bound at residue Glu-278.

It belongs to the FBPase class 1 family. In terms of assembly, homotetramer. Requires Mg(2+) as cofactor.

Its subcellular location is the cytoplasm. It catalyses the reaction beta-D-fructose 1,6-bisphosphate + H2O = beta-D-fructose 6-phosphate + phosphate. Its pathway is carbohydrate biosynthesis; gluconeogenesis. The protein is Fructose-1,6-bisphosphatase class 1 2 of Xanthobacter autotrophicus (strain ATCC BAA-1158 / Py2).